We begin with the raw amino-acid sequence, 418 residues long: Putative methylthiotransferase HP_0285 (418 aa).

The 109-residue stretch at 2–110 (KKVYFKTFGC…INALLQEKKR (109 aa)) folds into the MTTase N-terminal domain. Residues C11, C45, C74, C144, C148, and C151 each contribute to the [4Fe-4S] cluster site. A Radical SAM core domain is found at 130–355 (FVGKTRAFIK…KDLIFHKNKA (226 aa)).

It belongs to the methylthiotransferase family. [4Fe-4S] cluster is required as a cofactor.

The polypeptide is Putative methylthiotransferase HP_0285 (Helicobacter pylori (strain ATCC 700392 / 26695) (Campylobacter pylori)).